Reading from the N-terminus, the 459-residue chain is Eukaryotic translation initiation factor 3 subunit M (459 aa).

The region spanning leucine 207–tyrosine 384 is the PCI domain. The segment at alanine 431–glutamate 459 is disordered. Residues glutamate 434 to proline 452 are compositionally biased toward basic and acidic residues.

Belongs to the eIF-3 subunit M family. In terms of assembly, component of the eukaryotic translation initiation factor 3 (eIF-3) complex.

It localises to the cytoplasm. Its function is as follows. Component of the eukaryotic translation initiation factor 3 (eIF-3) complex, which is involved in protein synthesis of a specialized repertoire of mRNAs and, together with other initiation factors, stimulates binding of mRNA and methionyl-tRNAi to the 40S ribosome. The eIF-3 complex specifically targets and initiates translation of a subset of mRNAs involved in cell proliferation. The sequence is that of Eukaryotic translation initiation factor 3 subunit M from Emericella nidulans (strain FGSC A4 / ATCC 38163 / CBS 112.46 / NRRL 194 / M139) (Aspergillus nidulans).